The sequence spans 401 residues: Heat shock transcription factor, Y-linked (401 aa).

Over residues 1–11 (MAHVSSETQDV) the composition is skewed to polar residues. The interval 1–30 (MAHVSSETQDVSPKDELTASEASTRSPLCE) is disordered. A DNA-binding region spans residues 76–194 (LSLNFPRKLW…PQLLVRVKRR (119 aa)).

It belongs to the HSF family. As to expression, testis-specific. Present in Sertoli cells and spermatogenic cells (at protein level).

Its subcellular location is the nucleus. It is found in the cytoplasm. The protein is Heat shock transcription factor, Y-linked (HSFY1) of Homo sapiens (Human).